Here is a 1415-residue protein sequence, read N- to C-terminus: Zygote defective protein 9 (1415 aa).

TOG stretches follow at residues 1–250 and 251–530; these read MSNW…AKNA and PPVA…AGPA. Residues 21-48 adopt a coiled-coil conformation; sequence DELRESKKWQERKEALEALLKVLTDNER. HEAT repeat units lie at residues 30–68, 95–132, 135–172, and 179–217; these read QERKEALEALLKVLTDNERLSTKASYAELIGHLQMVLAK, SFAGPLLPVIFEKMKEKKPMLREPLVDCSNEVGRTMQS, TGQEDILAALAKPNPQIKQQTALFVARQLDLVVPAKQP, and VVPVFGKLTGDADQDVREASLQGLGAVQRIIGDKNVKNL. The interval 243–278 is disordered; sequence AEEQAKNAPPVAPTSSTPSASAASGDPSGGTATAVV. Residues 255–276 are compositionally biased toward low complexity; the sequence is PTSSTPSASAASGDPSGGTATA. 4 HEAT repeats span residues 339–377, 381–418, 420–457, and 464–502; these read ANYGALVERLQKVLEKDANINVAALAANCITGIANGLRT, PFAVSVTPIIFEKFKEKKPTLRDPLVACIDAVVATTNL, AVGEIVLAALGKPNPSIKTQTDLFLQRCFMKLNSQTMP, and LIPSLIKHSGDSDSEVREASYAAMGAMMRAIGEKPSLQL. The segment at 544-603 is disordered; it reads APPAAAPPKKTAPPKKQPEDEEVVEEEDEPLKPPPGDKKKKVPVKENEENEPPVVAPKAE. Positions 562–572 are enriched in acidic residues; it reads EDEEVVEEEDE. The interval 602-867 is TOG 3; it reads AELLLSDNED…VEERIKRTGV (266 aa). 3 HEAT repeats span residues 706-743, 764-801, and 804-841; these read IKVLELCKVIVELIRDTETPMSQEEVSAFVPYLLLKTG, VGPLKMTPMLLDALKSKNARQRSECLLVIEYYITNAGI, and LKSLSVEKTVAPFVGDKDVNVRNAAINVLVACFKFEGD. The tract at residues 867–914 is disordered; that stretch reads VKPGSGVVTSPPTGGPKILVPQQQGSVVRRPASRSRTREPEPEEVQSD.

This sequence belongs to the TOG/XMAP215 family. As to quaternary structure, interacts with tac-1 to form a heterodimer.

It is found in the cytoplasm. Its subcellular location is the cytoskeleton. The protein localises to the spindle pole. The protein resides in the microtubule organizing center. It localises to the centrosome. Plays a major role in organizing microtubules and spindle poles during mitosis and meiosis in one-cell stage embryos. Required for default nucleus positioning in oocytes. The sequence is that of Zygote defective protein 9 from Caenorhabditis elegans.